A 318-amino-acid polypeptide reads, in one-letter code: Ubiquitin-like domain-containing CTD phosphatase 1 (318 aa).

Residues 3–81 (LSLIIKWGGQ…IMMMGTREES (79 aa)) enclose the Ubiquitin-like domain. The FCP1 homology domain maps to 133 to 294 (PREGKKLLVL…LKLTQYLKEI (162 aa)). Mg(2+)-binding residues include aspartate 143, aspartate 145, and aspartate 253.

Mg(2+) serves as cofactor.

Its subcellular location is the nucleus. It carries out the reaction O-phospho-L-seryl-[protein] + H2O = L-seryl-[protein] + phosphate. The enzyme catalyses O-phospho-L-threonyl-[protein] + H2O = L-threonyl-[protein] + phosphate. Its function is as follows. Dephosphorylates 26S nuclear proteasomes, thereby decreasing their proteolytic activity. Recruited to the 19S regulatory particle of the 26S proteasome where it dephosphorylates 19S component PSMC2 which impairs PSMC2 ATPase activity and disrupts 26S proteasome assembly. Has also been reported to stimulate the proteolytic activity of the 26S proteasome. The polypeptide is Ubiquitin-like domain-containing CTD phosphatase 1 (UBLCP1) (Gallus gallus (Chicken)).